The primary structure comprises 351 residues: Hydroxymethylglutaryl-CoA synthase (351 aa).

Glu80 serves as the catalytic Proton donor/acceptor. The active-site Acyl-thioester intermediate is the Cys112. The (3S)-3-hydroxy-3-methylglutaryl-CoA site is built by Cys112 and Ser153. CoA is bound at residue Arg199. 2 residues coordinate (3S)-3-hydroxy-3-methylglutaryl-CoA: Thr201 and His234. Residue His234 is the Proton donor/acceptor of the active site. Lys239 lines the CoA pocket. 3 residues coordinate (3S)-3-hydroxy-3-methylglutaryl-CoA: Arg243, Asn266, and Ser296.

The protein belongs to the thiolase-like superfamily. Archaeal HMG-CoA synthase family. Interacts with acetoacetyl-CoA thiolase that catalyzes the precedent step in the pathway and with a DUF35 protein. The acetoacetyl-CoA thiolase/HMG-CoA synthase complex channels the intermediate via a fused CoA-binding site, which allows for efficient coupling of the endergonic thiolase reaction with the exergonic HMGCS reaction.

It carries out the reaction acetoacetyl-CoA + acetyl-CoA + H2O = (3S)-3-hydroxy-3-methylglutaryl-CoA + CoA + H(+). It participates in metabolic intermediate biosynthesis; (R)-mevalonate biosynthesis; (R)-mevalonate from acetyl-CoA: step 2/3. In terms of biological role, catalyzes the condensation of acetyl-CoA with acetoacetyl-CoA to form 3-hydroxy-3-methylglutaryl-CoA (HMG-CoA). Functions in the mevalonate (MVA) pathway leading to isopentenyl diphosphate (IPP), a key precursor for the biosynthesis of isoprenoid compounds that are building blocks of archaeal membrane lipids. In Thermoplasma acidophilum (strain ATCC 25905 / DSM 1728 / JCM 9062 / NBRC 15155 / AMRC-C165), this protein is Hydroxymethylglutaryl-CoA synthase.